Reading from the N-terminus, the 255-residue chain is MSRISDAFQKRKSLIAYITVGYPDIETTLRLVPLLEENGVDIIELGIPFSDPLADGVTIQNASYQALQNGVTPEVCLSVAALLKEKISIPMVFMGYYNPIYNYGLTKFCQKCATAGVSGFIIPDLPPGEAQDIDFAAREAGLDIIFLLAPTSTDERIKLVAAKSRGFIYLVSHSGVTGATANLPADLSSFVNRVRKTARQPLAVGFGISTPEQAQNIAKFSDGIIVGSRILQLVQTDPSLEKVATFIRQLRQSLD.

Catalysis depends on proton acceptor residues Glu44 and Asp55.

This sequence belongs to the TrpA family. In terms of assembly, tetramer of two alpha and two beta chains.

It catalyses the reaction (1S,2R)-1-C-(indol-3-yl)glycerol 3-phosphate + L-serine = D-glyceraldehyde 3-phosphate + L-tryptophan + H2O. It functions in the pathway amino-acid biosynthesis; L-tryptophan biosynthesis; L-tryptophan from chorismate: step 5/5. Its function is as follows. The alpha subunit is responsible for the aldol cleavage of indoleglycerol phosphate to indole and glyceraldehyde 3-phosphate. The chain is Tryptophan synthase alpha chain from Dehalococcoides mccartyi (strain ATCC BAA-2100 / JCM 16839 / KCTC 5957 / BAV1).